We begin with the raw amino-acid sequence, 383 residues long: Neuropeptide Y receptor type 1 (383 aa).

The Extracellular segment spans residues 1-34 (MNSTSFSQLENHSVHYNLSEEKPSFFAFENDDCH). Residues asparagine 2, asparagine 11, and asparagine 17 are each glycosylated (N-linked (GlcNAc...) asparagine). The chain crosses the membrane as a helical span at residues 35–55 (LPLAVIFTLALAYGAVIILGV). Residues 56–87 (SGNLALILIILKQKEMRNVTNILIVNLSFSDL) lie on the Cytoplasmic side of the membrane. The helical transmembrane segment at 88-108 (LVAIMCLPFTFVYTLMDHWIF) threads the bilayer. Topologically, residues 109 to 116 (GEIMCKLN) are extracellular. A disulfide bridge connects residues cysteine 113 and cysteine 198. The chain crosses the membrane as a helical span at residues 117-137 (PFVQCVSITVSIFSLVLIAVE). Topologically, residues 138-154 (RHQLIINPRGWRPNNRH) are cytoplasmic. A helical membrane pass occupies residues 155–175 (AYIGIAVIWVLAVASSLPFMI). Topologically, residues 176–211 (YQVLTDEPFQNVTLDAFKDKLVCFDQFPSDSHRLSY) are extracellular. The helical transmembrane segment at 212-232 (TTLLLVLQYFGPLCFIFICYF) threads the bilayer. Over 233-260 (KIYIRLKRRNNMMDKMRDSKYRSSESKR) the chain is Cytoplasmic. A helical transmembrane segment spans residues 261-281 (INIMLLSIVVAFAVCWLPLTI). Over 282–299 (FNTVFDWNHQIIATCNHN) the chain is Extracellular. Residues 300 to 320 (LLFLLCHLTAMISTCVNPIFY) traverse the membrane as a helical segment. Topologically, residues 321–383 (GFLNKNFQRD…KISCVENEKI (63 aa)) are cytoplasmic. The S-palmitoyl cysteine moiety is linked to residue cysteine 338. Serine 368 and serine 376 each carry phosphoserine.

The protein belongs to the G-protein coupled receptor 1 family.

Its subcellular location is the cell membrane. In terms of biological role, receptor for neuropeptide Y and peptide YY. The chain is Neuropeptide Y receptor type 1 (NPY1R) from Cavia porcellus (Guinea pig).